Reading from the N-terminus, the 634-residue chain is Frizzled and smoothened-like protein D (634 aa).

The N-terminal stretch at 1–21 (MINKFKFYLIFLKLILILVNC) is a signal peptide. The Extracellular segment spans residues 22-257 (QNSLNDYGFG…QMDSVINMSK (236 aa)). An FZ domain is found at 34-178 (DESSICTSYI…LTKYGYTANG (145 aa)). 5 N-linked (GlcNAc...) asparagine glycosylation sites follow: N126, N168, N215, N243, and N254. Residues 258-278 (AMSSISFVLSLFNVITFGLLI) form a helical membrane-spanning segment. Topologically, residues 279–287 (KKKSKYNVC) are cytoplasmic. A helical membrane pass occupies residues 288–308 (IALMAIGSSFIYLSDIINYGV). Topologically, residues 309–335 (GIEKQLCPEPGRVATQRVDSLCGFTGS) are extracellular. A helical transmembrane segment spans residues 336–356 (IFHIGITLCVLWSMTMGIVLY). The Cytoplasmic portion of the chain corresponds to 357–368 (SKIKQFKLPNFR). Residues 369 to 389 (YFLIGNLSFTVVTLIILASAK) traverse the membrane as a helical segment. Over 390–410 (KFQGGNGFLECWMRDRWYVVA) the chain is Extracellular. The chain crosses the membrane as a helical span at residues 411 to 431 (IFWIPCGIALLLGVLSICGVI). Residues 432-454 (FEIYKISKNVSLKDSKVVIRELK) lie on the Cytoplasmic side of the membrane. Residues 455 to 475 (PFVLVVTVSASLIYLFVFYFD) form a helical membrane-spanning segment. The Extracellular portion of the chain corresponds to 476–513 (SESKYDFYKKGVEDYILCLLTSENPLDECYTVGPNFNS). The helical transmembrane segment at 514–534 (YFMFYFLIRFFGILFFGIFGT) threads the bilayer. At 535–634 (SEIARNAWTE…MEIELDSIDI (100 aa)) the chain is on the cytoplasmic side. The disordered stretch occupies residues 560–624 (VSSSTRGGGG…NNNNNDNNNK (65 aa)). Low complexity-rich tracts occupy residues 572-592 (SGIK…NNST) and 609-622 (DNTI…NDNN).

This sequence belongs to the G-protein coupled receptor Fz/Smo family.

The protein resides in the membrane. The chain is Frizzled and smoothened-like protein D (fslD) from Dictyostelium discoideum (Social amoeba).